Reading from the N-terminus, the 460-residue chain is Transcriptional regulatory protein UME1 (460 aa).

The NEE-box motif lies at 14 to 22; the sequence is NEEFKIWKK. 4 WD repeats span residues 233 to 271, 276 to 316, 339 to 379, and 411 to 451; these read PGIK…KPLW, SLDG…ALGD, FYSE…AIYN, and GENN…VLDG.

In terms of assembly, component of the RPD3C(L) complex composed of at least ASH1, CTI6, DEP1, PHO23, RPD3, RXT2, RXT3, SAP30, SDS3, SIN3, UME1 and UME6. Component of the RPD3C(S) complex composed of at least EAF3, RCO1, RPD3, SIN3, and UME1. Interacts with RPD3.

The protein localises to the cytoplasm. It localises to the nucleus. Catalytic component of the RPD3 histone deacetylase complexes RPD3C(L) and RPD3C(S) responsible for the deacetylation of lysine residues on the N-terminal part of the core histones (H2A, H2B, H3 and H4). Histone deacetylation gives a tag for epigenetic repression and plays an important role in transcriptional regulation, cell cycle progression and developmental events. The protein is Transcriptional regulatory protein UME1 (UME1) of Saccharomyces cerevisiae (strain ATCC 204508 / S288c) (Baker's yeast).